A 449-amino-acid chain; its full sequence is Glutamyl-tRNA reductase (449 aa).

Substrate contacts are provided by residues 48 to 51 (TCNR), Ser-99, 104 to 106 (EDQ), and Gln-110. Cys-49 (nucleophile) is an active-site residue. Position 179-184 (179-184 (GAGEIG)) interacts with NADP(+).

It belongs to the glutamyl-tRNA reductase family. Homodimer.

It catalyses the reaction (S)-4-amino-5-oxopentanoate + tRNA(Glu) + NADP(+) = L-glutamyl-tRNA(Glu) + NADPH + H(+). It functions in the pathway porphyrin-containing compound metabolism; protoporphyrin-IX biosynthesis; 5-aminolevulinate from L-glutamyl-tRNA(Glu): step 1/2. Functionally, catalyzes the NADPH-dependent reduction of glutamyl-tRNA(Glu) to glutamate 1-semialdehyde (GSA). The polypeptide is Glutamyl-tRNA reductase (Methanosarcina barkeri (strain Fusaro / DSM 804)).